The primary structure comprises 825 residues: Cytosolic phospholipase A2 delta (825 aa).

In terms of domain architecture, C2 spans 14–133 (SPERLHGHPY…LPGQLLQKTF (120 aa)). Ca(2+) contacts are provided by Asp47, Asp53, Asp103, Asp105, and Asp111. The 545-residue stretch at 281–825 (DCCPKELSVR…SETRPLGVKT (545 aa)) folds into the PLA2c domain. 339 to 340 (GG) is a substrate binding site. Ser370 acts as the Nucleophile in catalysis. Asp654 functions as the Proton acceptor in the catalytic mechanism.

Ca(2+) serves as cofactor. Weakly or not expressed in most tissues. Detected in placenta of 17.5 dpc embryos.

The protein localises to the cytoplasm. It is found in the cytosol. It localises to the membrane. The catalysed reaction is a 1,2-diacyl-sn-glycero-3-phosphocholine + H2O = a 1-acyl-sn-glycero-3-phosphocholine + a fatty acid + H(+). It carries out the reaction 1-hexadecanoyl-2-(5Z,8Z,11Z,14Z-eicosatetraenoyl)-sn-glycero-3-phosphocholine + H2O = 1-hexadecanoyl-sn-glycero-3-phosphocholine + (5Z,8Z,11Z,14Z)-eicosatetraenoate + H(+). It catalyses the reaction 1-hexadecanoyl-2-(9Z,12Z-octadecadienoyl)-sn-glycero-3-phosphocholine + H2O = (9Z,12Z)-octadecadienoate + 1-hexadecanoyl-sn-glycero-3-phosphocholine + H(+). The enzyme catalyses 1-hexadecanoyl-2-(9Z-octadecenoyl)-sn-glycero-3-phosphocholine + H2O = 1-hexadecanoyl-sn-glycero-3-phosphocholine + (9Z)-octadecenoate + H(+). The catalysed reaction is 1-hexadecanoyl-2-(5Z,8Z,11Z,14Z-eicosatetraenoyl)-sn-glycero-3-phosphoethanolamine + H2O = 1-hexadecanoyl-sn-glycero-3-phosphoethanolamine + (5Z,8Z,11Z,14Z)-eicosatetraenoate + H(+). It carries out the reaction 1-hexadecanoyl-2-(9Z,12Z-octadecadienoyl)-sn-glycero-3-phosphoethanolamine + H2O = 1-hexadecanoyl-sn-glycero-3-phosphoethanolamine + (9Z,12Z)-octadecadienoate + H(+). It catalyses the reaction 1-hexadecanoyl-sn-glycero-3-phosphocholine + H2O = sn-glycerol 3-phosphocholine + hexadecanoate + H(+). The protein operates within lipid metabolism; fatty acid metabolism. Its activity is regulated as follows. Stimulated by cytosolic Ca(2+). In terms of biological role, calcium-dependent phospholipase A2 that selectively hydrolyzes glycerophospholipids in the sn-2 position. Compared to its human ortholog, may have no preference for the fatty acid found at the sn-2 position. This chain is Cytosolic phospholipase A2 delta, found in Mus musculus (Mouse).